Reading from the N-terminus, the 558-residue chain is Atlastin-1 (558 aa).

Positions 1 to 27 (MAKNRRDRNSWGGFSEKTYEWSSEEEE) are disordered. The segment at 1–34 (MAKNRRDRNSWGGFSEKTYEWSSEEEEPVKKAGP) is N-terminal hypervariable region (HVR). Residues 1–449 (MAKNRRDRNS…NIFHAARTPA (449 aa)) lie on the Cytoplasmic side of the membrane. Residues Ser10, Ser22, and Ser23 each carry the phosphoserine modification. One can recognise a GB1/RHD3-type G domain in the interval 64-309 (DKEVVAVSVA…LIPWLLSPES (246 aa)). Arg77, Lys78, Gly79, Lys80, Ser81, Phe82, Gln148, Arg217, Asp218, Val276, and Asn279 together coordinate GDP. 6 residues coordinate GTP: Arg77, Lys78, Gly79, Lys80, Ser81, and Phe82. Ser81 contributes to the Mg(2+) binding site. Positions 217, 218, and 276 each coordinate GTP. Residues 347 to 438 (MLQATAEANN…YIQYIKHNDS (92 aa)) form a 3HB (three-helix bundle) domain region. Lys395 carries the N6-acetyllysine modification. The stretch at 412 to 439 (EFSRRYLQQLESEIDELYIQYIKHNDSK) forms a coiled coil. The interval 439 to 447 (KNIFHAART) is linker. A helical transmembrane segment spans residues 450-470 (TLFVVIFITYVIAGVTGFIGL). A topological domain (lumenal) is located at residue Asp471. Residues 472–492 (IIASLCNMIMGLTLITLCTWA) form a helical membrane-spanning segment. The Cytoplasmic portion of the chain corresponds to 493 to 558 (YIRYSGEYRE…STEQSEKKKM (66 aa)). Residues 521–558 (NEALYKLYSAAATHRHLYHQAFPTPKSESTEQSEKKKM) form an autoinhibitory domain region.

It belongs to the TRAFAC class dynamin-like GTPase superfamily. GB1/RHD3 GTPase family. GB1 subfamily. Monomeric and homodimeric. The homodimer, transiently formed by two molecules on opposing membranes, is the active form mediating ER membrane fusion. Interacts with REEP1, REEP5, RTN3 and RTN4 (via the transmembrane region); these proteins are involved in endoplasmic reticulum tubular network organization. Interacts with ZFYVE27; both proteins are involved in endoplasmic reticulum tubular network organization. Interacts with ARL6IP1; both proteins are involved in endoplasmic reticulum tubular network organization. Interacts with SPAST; the interaction is direct, could recruit SPAST to Golgi membranes. Interacts (via N-terminal region) with MAP4K4 (via CNH regulatory domain). May interact with TMED2. Interacts with CPT1C. Post-translationally, phosphorylated. Phosphorylation, by different kinases, of the N-terminal hypervariable region (HVR) regulates the ATL1-mediated membrane tethering step.

It localises to the endoplasmic reticulum membrane. It is found in the golgi apparatus membrane. The protein resides in the cell projection. The protein localises to the axon. The enzyme catalyses GTP + H2O = GDP + phosphate + H(+). Functionally, atlastin-1 (ATL1) is a membrane-anchored GTPase that mediates the GTP-dependent fusion of endoplasmic reticulum (ER) membranes, maintaining the continuous ER network. It facilitates the formation of three-way junctions where ER tubules intersect. Two atlastin-1 on neighboring ER tubules bind GTP and form loose homodimers through the GB1/RHD3-type G domains and 3HB regions. Upon GTP hydrolysis, the 3HB regions tighten, pulling the membranes together to drive their fusion. After fusion, the homodimer disassembles upon release of inorganic phosphate (Pi). Subsequently, GDP dissociates, resetting the monomers to a conformation ready for a new fusion cycle. May also regulate more or less directly Golgi biogenesis. Indirectly regulates axonal development. In Pongo abelii (Sumatran orangutan), this protein is Atlastin-1.